A 105-amino-acid chain; its full sequence is Large ribosomal subunit protein eL36 (105 aa).

K62 carries the post-translational modification N6-acetyllysine.

The protein belongs to the eukaryotic ribosomal protein eL36 family. Component of the large ribosomal subunit.

It is found in the cytoplasm. It localises to the cytosol. In terms of biological role, component of the large ribosomal subunit. The ribosome is a large ribonucleoprotein complex responsible for the synthesis of proteins in the cell. This chain is Large ribosomal subunit protein eL36 (RPL36), found in Homo sapiens (Human).